We begin with the raw amino-acid sequence, 85 residues long: Cell division topological specificity factor (85 aa).

This sequence belongs to the MinE family.

Prevents the cell division inhibition by proteins MinC and MinD at internal division sites while permitting inhibition at polar sites. This ensures cell division at the proper site by restricting the formation of a division septum at the midpoint of the long axis of the cell. This chain is Cell division topological specificity factor, found in Shewanella sp. (strain ANA-3).